The sequence spans 599 residues: Leucine zipper putative tumor suppressor 1 (599 aa).

A lipid anchor (N-myristoyl glycine) is attached at glycine 2. Disordered stretches follow at residues 135–190 (GAIL…TTSS) and 288–324 (EFAS…KSQR). Residues 153 to 162 (PPDKPKEQEL) show a composition bias toward basic and acidic residues. The segment covering 174–190 (SGRNSMSSLPTHSTTSS) has biased composition (polar residues). Residues 256–572 (LSTDECTIQE…LEKALQQLAR (317 aa)) are a coiled coil. The segment covering 288 to 313 (EFASGQTFEERPRRTRDELECLEPKS) has biased composition (basic and acidic residues).

This sequence belongs to the LZTS family. As to quaternary structure, binds EEF1G, TLK2 and CDK1. Post-translationally, phosphorylated on serine residues. Hyperphosphorylated by the cAMP-dependent kinase PKA during cell-cycle progression.

It localises to the cytoplasm. The protein localises to the cell membrane. Its subcellular location is the cell projection. The protein resides in the dendritic spine. It is found in the postsynaptic density. It localises to the synapse. In terms of biological role, involved in the regulation of cell growth. May stabilize the active CDC2-cyclin B1 complex and thereby contribute to the regulation of the cell cycle and the prevention of uncontrolled cell proliferation. May act as tumor suppressor. This Mus musculus (Mouse) protein is Leucine zipper putative tumor suppressor 1 (Lzts1).